Reading from the N-terminus, the 167-residue chain is Histidinol dehydrogenase (167 aa).

Positions 109 and 112 each coordinate Zn(2+).

This sequence belongs to the histidinol dehydrogenase family. In terms of assembly, homodimer. It depends on Zn(2+) as a cofactor.

The enzyme catalyses L-histidinol + 2 NAD(+) + H2O = L-histidine + 2 NADH + 3 H(+). It functions in the pathway amino-acid biosynthesis; L-histidine biosynthesis; L-histidine from 5-phospho-alpha-D-ribose 1-diphosphate: step 9/9. Catalyzes the sequential NAD-dependent oxidations of L-histidinol to L-histidinaldehyde and then to L-histidine. The chain is Histidinol dehydrogenase (hisD) from Salmonella enteritidis.